The sequence spans 304 residues: Glycine--tRNA ligase alpha subunit (304 aa).

This sequence belongs to the class-II aminoacyl-tRNA synthetase family. In terms of assembly, tetramer of two alpha and two beta subunits.

The protein localises to the cytoplasm. It carries out the reaction tRNA(Gly) + glycine + ATP = glycyl-tRNA(Gly) + AMP + diphosphate. The protein is Glycine--tRNA ligase alpha subunit of Pectobacterium carotovorum subsp. carotovorum (strain PC1).